The sequence spans 49 residues: Large ribosomal subunit protein bL33C (49 aa).

Residues 21-49 (KNKRNNPDRVEFKKYCPRDKKSTLHRETK) are disordered. Positions 25–49 (NNPDRVEFKKYCPRDKKSTLHRETK) are enriched in basic and acidic residues.

The protein belongs to the bacterial ribosomal protein bL33 family.

This is Large ribosomal subunit protein bL33C from Bacillus licheniformis (strain ATCC 14580 / DSM 13 / JCM 2505 / CCUG 7422 / NBRC 12200 / NCIMB 9375 / NCTC 10341 / NRRL NRS-1264 / Gibson 46).